Consider the following 79-residue polypeptide: Probable [Fe-S]-dependent transcriptional repressor (79 aa).

The iron-sulfur cluster site is built by Cys56, Cys61, Cys64, and Cys71.

The protein belongs to the FeoC family.

In terms of biological role, may function as a transcriptional regulator that controls feoABC expression. The protein is Probable [Fe-S]-dependent transcriptional repressor of Klebsiella pneumoniae (strain 342).